We begin with the raw amino-acid sequence, 910 residues long: SWI/SNF-related matrix-associated actin-dependent regulator of chromatin subfamily A-like protein 1 (910 aa).

The interval 1–198 is disordered; the sequence is MSLPLTEEQR…PPNILQTTPQ (198 aa). Residue serine 2 is modified to N-acetylserine. Mediates interaction with RPA2 stretches follow at residues 2–29 and 5–29; these read SLPLTEEQRKKIEENRQKALARRAEKLS and LTEEQRKKIEENRQKALARRAEKLS. Residues 3–34 are a coiled coil; sequence LPLTEEQRKKIEENRQKALARRAEKLSEQPQS. The segment covering 7 to 29 has biased composition (basic and acidic residues); it reads EEQRKKIEENRQKALARRAEKLS. The segment covering 31–51 has biased composition (low complexity); that stretch reads QPQSAASGSSAAGPSQSKQGS. Positions 69–80 are enriched in polar residues; it reads FKQQNLSNSFPT. The residue at position 118 (serine 118) is a Phosphoserine. Polar residues-rich tracts occupy residues 133 to 149 and 164 to 173; these read SEGQPQATWDTGASSSG and PSTSRQSISD. Serine 165 is subject to Phosphoserine. HARP domains are found at residues 199-269 and 286-357; these read NTGF…KPLD and SLTF…DPLP. Residues 404–559 enclose the Helicase ATP-binding domain; it reads SFAISKRGRL…YTQIIAVKPT (156 aa). 417–424 contacts ATP; it reads DDMGLGKT. Positions 508-511 match the DESH box motif; that stretch reads DESH. Positions 603-620 match the Nuclear localization signal motif; it reads RRLKSDVLSQLPAKQRKM. The Helicase C-terminal domain maps to 674–827; that stretch reads YILDLLDSGR…ETNFSEMTEA (154 aa). Residues 868 to 878 are compositionally biased toward polar residues; the sequence is STSGTSGNISQ. The disordered stretch occupies residues 868–896; sequence STSGTSGNISQDLGDLLDEDEGSPPKKSR.

Belongs to the SNF2/RAD54 helicase family. SMARCAL1 subfamily. In terms of assembly, interacts with RPA2; the interaction is direct and mediates the recruitment by the RPA complex of SMARCAL1 to sites of DNA damage. In terms of processing, DNA damage-regulated phosphorylation by kinases that may include ATM, ATR and PRKDC. Ubiquitously expressed, with high levels in brain, heart, kidney, liver and testis.

The protein localises to the nucleus. It catalyses the reaction ATP + H2O = ADP + phosphate + H(+). ATP-dependent annealing helicase that binds selectively to fork DNA relative to ssDNA or dsDNA and catalyzes the rewinding of the stably unwound DNA. Rewinds single-stranded DNA bubbles that are stably bound by replication protein A (RPA). Acts throughout the genome to reanneal stably unwound DNA, performing the opposite reaction of many enzymes, such as helicases and polymerases, that unwind DNA. May play an important role in DNA damage response by acting at stalled replication forks. In Mus musculus (Mouse), this protein is SWI/SNF-related matrix-associated actin-dependent regulator of chromatin subfamily A-like protein 1 (Smarcal1).